Consider the following 263-residue polypeptide: Ribosomal RNA small subunit methyltransferase J (263 aa).

S-adenosyl-L-methionine contacts are provided by residues 108 to 109, 124 to 125, and Asp178; these read RD and ER.

This sequence belongs to the methyltransferase superfamily. RsmJ family.

It is found in the cytoplasm. The enzyme catalyses guanosine(1516) in 16S rRNA + S-adenosyl-L-methionine = N(2)-methylguanosine(1516) in 16S rRNA + S-adenosyl-L-homocysteine + H(+). Functionally, specifically methylates the guanosine in position 1516 of 16S rRNA. This chain is Ribosomal RNA small subunit methyltransferase J, found in Idiomarina loihiensis (strain ATCC BAA-735 / DSM 15497 / L2-TR).